The primary structure comprises 782 residues: Vacuolar import and degradation protein 27 (782 aa).

Phosphoserine occurs at positions 170, 195, and 196. Residues 188–200 (DDDDELDSSSDDF) are compositionally biased toward acidic residues. The interval 188 to 215 (DDDDELDSSSDDFQDAKDTSFEHEKESE) is disordered. The segment covering 201 to 215 (QDAKDTSFEHEKESE) has biased composition (basic and acidic residues). A Phosphoserine modification is found at serine 222. Over residues 372-384 (DDRSNEERDKESS) the composition is skewed to basic and acidic residues. The tract at residues 372–422 (DDRSNEERDKESSESENDSEDEDDENDHSKRIISSEAFEEPRRATSKGNSS) is disordered. The segment covering 385–397 (ESENDSEDEDDEN) has biased composition (acidic residues). Threonine 486 is modified (phosphothreonine).

It belongs to the VID27 family.

The protein resides in the cytoplasm. Its function is as follows. Has a role in the negative regulation of gluconeogenesis. Required for vacuolar catabolite degradation of fructose-1,6-bisphosphatase (FBPase). This Saccharomyces cerevisiae (strain ATCC 204508 / S288c) (Baker's yeast) protein is Vacuolar import and degradation protein 27 (VID27).